The chain runs to 184 residues: Large ribosomal subunit protein uL5c (184 aa).

It belongs to the universal ribosomal protein uL5 family. Part of the 50S ribosomal subunit; contacts the 5S rRNA.

The protein resides in the plastid. Its subcellular location is the chloroplast. Its function is as follows. Binds 5S rRNA, forms part of the central protuberance of the 50S subunit. The chain is Large ribosomal subunit protein uL5c (rpl5) from Nephroselmis olivacea (Green alga).